Consider the following 222-residue polypeptide: Phosphoribosylformylglycinamidine synthase subunit PurQ (222 aa).

The region spanning 3–222 is the Glutamine amidotransferase type-1 domain; it reads AAVVVFPGSN…RALAGALTPA (220 aa). C86 acts as the Nucleophile in catalysis. Active-site residues include H194 and E196.

In terms of assembly, part of the FGAM synthase complex composed of 1 PurL, 1 PurQ and 2 PurS subunits.

Its subcellular location is the cytoplasm. The enzyme catalyses N(2)-formyl-N(1)-(5-phospho-beta-D-ribosyl)glycinamide + L-glutamine + ATP + H2O = 2-formamido-N(1)-(5-O-phospho-beta-D-ribosyl)acetamidine + L-glutamate + ADP + phosphate + H(+). It carries out the reaction L-glutamine + H2O = L-glutamate + NH4(+). The protein operates within purine metabolism; IMP biosynthesis via de novo pathway; 5-amino-1-(5-phospho-D-ribosyl)imidazole from N(2)-formyl-N(1)-(5-phospho-D-ribosyl)glycinamide: step 1/2. In terms of biological role, part of the phosphoribosylformylglycinamidine synthase complex involved in the purines biosynthetic pathway. Catalyzes the ATP-dependent conversion of formylglycinamide ribonucleotide (FGAR) and glutamine to yield formylglycinamidine ribonucleotide (FGAM) and glutamate. The FGAM synthase complex is composed of three subunits. PurQ produces an ammonia molecule by converting glutamine to glutamate. PurL transfers the ammonia molecule to FGAR to form FGAM in an ATP-dependent manner. PurS interacts with PurQ and PurL and is thought to assist in the transfer of the ammonia molecule from PurQ to PurL. This chain is Phosphoribosylformylglycinamidine synthase subunit PurQ, found in Ruegeria pomeroyi (strain ATCC 700808 / DSM 15171 / DSS-3) (Silicibacter pomeroyi).